A 68-amino-acid polypeptide reads, in one-letter code: DNA-directed RNA polymerase subunit omega (68 aa).

The protein belongs to the RNA polymerase subunit omega family. In terms of assembly, the RNAP catalytic core consists of 2 alpha, 1 beta, 1 beta' and 1 omega subunit. When a sigma factor is associated with the core the holoenzyme is formed, which can initiate transcription.

It carries out the reaction RNA(n) + a ribonucleoside 5'-triphosphate = RNA(n+1) + diphosphate. Functionally, promotes RNA polymerase assembly. Latches the N- and C-terminal regions of the beta' subunit thereby facilitating its interaction with the beta and alpha subunits. This is DNA-directed RNA polymerase subunit omega from Nitrosospira multiformis (strain ATCC 25196 / NCIMB 11849 / C 71).